The following is a 365-amino-acid chain: Neutral protease 2 homolog mep20 (365 aa).

The N-terminal stretch at 1 to 19 is a signal peptide; sequence MKVTILASAILALINGALA. Positions 20–172 are excised as a propeptide; sequence LPANTPTLDV…PQAIKLLDRR (153 aa). N-linked (GlcNAc...) asparagine glycosylation is present at Asn73. 2 disulfides stabilise this stretch: Cys178/Cys249 and Cys256/Cys274. His299 is a Zn(2+) binding site. The active site involves Glu300. His303 and Asp314 together coordinate Zn(2+). Residue Asn351 is glycosylated (N-linked (GlcNAc...) asparagine).

This sequence belongs to the peptidase M35 family. Zn(2+) is required as a cofactor.

It is found in the secreted. The catalysed reaction is Preferential cleavage of bonds with hydrophobic residues in P1'. Also 3-Asn-|-Gln-4 and 8-Gly-|-Ser-9 bonds in insulin B chain.. Secreted metalloproteinase that allows assimilation of proteinaceous substrates. Shows high activities on basic nuclear substrates such as histone and protamine. May be involved in virulence. The chain is Neutral protease 2 homolog mep20 (mep20) from Aspergillus fumigatus (Neosartorya fumigata).